Reading from the N-terminus, the 421-residue chain is UDP-N-acetylglucosamine 1-carboxyvinyltransferase (421 aa).

22-23 (KN) lines the phosphoenolpyruvate pocket. Residue arginine 92 coordinates UDP-N-acetyl-alpha-D-glucosamine. Catalysis depends on aspartate 116, which acts as the Proton donor. UDP-N-acetyl-alpha-D-glucosamine contacts are provided by residues 121–125 (RPIDQ), aspartate 307, and isoleucine 330.

The protein belongs to the EPSP synthase family. MurA subfamily.

It localises to the cytoplasm. The catalysed reaction is phosphoenolpyruvate + UDP-N-acetyl-alpha-D-glucosamine = UDP-N-acetyl-3-O-(1-carboxyvinyl)-alpha-D-glucosamine + phosphate. The protein operates within cell wall biogenesis; peptidoglycan biosynthesis. Functionally, cell wall formation. Adds enolpyruvyl to UDP-N-acetylglucosamine. The sequence is that of UDP-N-acetylglucosamine 1-carboxyvinyltransferase from Lactobacillus johnsonii (strain CNCM I-12250 / La1 / NCC 533).